A 1706-amino-acid chain; its full sequence is Probable ATP-dependent RNA helicase DDX60-like (1706 aa).

Residues arginine 545–glutamine 580 form a disordered region. The span at serine 551–histidine 564 shows a compositional bias: polar residues. The segment covering glutamine 565–serine 574 has biased composition (basic residues). The region spanning leucine 752 to lysine 919 is the Helicase ATP-binding domain. Position 765–772 (alanine 765–threonine 772) interacts with ATP. Residues aspartate 869 to histidine 872 carry the DEAH box motif. A Helicase C-terminal domain is found at aspartate 1205–leucine 1354.

It belongs to the helicase family.

It catalyses the reaction ATP + H2O = ADP + phosphate + H(+). This is Probable ATP-dependent RNA helicase DDX60-like from Homo sapiens (Human).